A 212-amino-acid polypeptide reads, in one-letter code: Ras-related protein RABC1 (212 aa).

The residue at position 2 (glycine 2) is an N-acetylglycine. 20–27 (GDSGVGKS) serves as a coordination point for GTP. The Effector region motif lies at 41–49 (LSPTIGVDF). GTP is bound by residues 67–71 (DTAGQ), 127–130 (NKVD), and 157–158 (SA). The tract at residues 182-212 (TAEGSSGGKKNIFKQNPAQTTSTSSSYCCSS) is disordered. Residues 201–212 (TTSTSSSYCCSS) are compositionally biased toward low complexity. S-geranylgeranyl cysteine attachment occurs at residues cysteine 209 and cysteine 210.

This sequence belongs to the small GTPase superfamily. Rab family.

The protein resides in the cell membrane. Intracellular vesicle trafficking and protein transport. This Arabidopsis thaliana (Mouse-ear cress) protein is Ras-related protein RABC1 (RABC1).